The primary structure comprises 191 residues: SCO2-like protein RP031 (191 aa).

The protein belongs to the SCO1/2 family.

This chain is SCO2-like protein RP031, found in Rickettsia prowazekii (strain Madrid E).